A 517-amino-acid chain; its full sequence is T-box transcription factor TBX22 (517 aa).

The segment at 1–83 (MALSSRAHAF…SDESNSQESL (83 aa)) is disordered. A compositionally biased stretch (acidic residues) spans 35-45 (LQEEQFVEEGE). The segment covering 46–66 (EILRSPSRDSQQPEKRLKAES) has biased composition (basic and acidic residues). Positions 74–83 (SDESNSQESL) are enriched in low complexity. Positions 93-280 (LQGSDLWKRF…RNPFAKGFRD (188 aa)) form a DNA-binding region, T-box. Residues 312-333 (TQSGSSGSSPVTSSGGAPSPLN) form a disordered region. The span at 314–333 (SGSSGSSPVTSSGGAPSPLN) shows a compositional bias: low complexity.

Its subcellular location is the nucleus. Its function is as follows. Probable transcriptional regulator involved in developmental processes. This is major determinant crucial to palatogenesis. The chain is T-box transcription factor TBX22 (Tbx22) from Mus musculus (Mouse).